Reading from the N-terminus, the 245-residue chain is tRNA (guanine-N(7)-)-methyltransferase (245 aa).

S-adenosyl-L-methionine-binding residues include E71, E96, D123, and D146. Residue D146 is part of the active site. K150 serves as a coordination point for substrate. The segment at 152-157 is interaction with RNA; the sequence is KHNKRR. Substrate-binding positions include D182 and 224–227; that span reads TKFE.

It belongs to the class I-like SAM-binding methyltransferase superfamily. TrmB family.

The enzyme catalyses guanosine(46) in tRNA + S-adenosyl-L-methionine = N(7)-methylguanosine(46) in tRNA + S-adenosyl-L-homocysteine. It participates in tRNA modification; N(7)-methylguanine-tRNA biosynthesis. In terms of biological role, catalyzes the formation of N(7)-methylguanine at position 46 (m7G46) in tRNA. This chain is tRNA (guanine-N(7)-)-methyltransferase, found in Albidiferax ferrireducens (strain ATCC BAA-621 / DSM 15236 / T118) (Rhodoferax ferrireducens).